A 272-amino-acid chain; its full sequence is R3H domain-containing protein 4 (272 aa).

The tract at residues 141-167 is disordered; sequence LEDEGKSKARRRGPTRGEDRRREDPAY. Residues 155–165 show a composition bias toward basic and acidic residues; sequence TRGEDRRREDP. One can recognise an R3H domain in the interval 191–254; it reads METLETWEER…KRQMKVSNRH (64 aa).

It localises to the nucleus. The protein is R3H domain-containing protein 4 (R3HDM4) of Bos taurus (Bovine).